A 366-amino-acid polypeptide reads, in one-letter code: tRNA-queuosine alpha-mannosyltransferase (366 aa).

Belongs to the glycosyltransferase group 1 family. Glycosyltransferase 4 subfamily.

The protein resides in the cytoplasm. It localises to the nucleus. The enzyme catalyses queuosine(34) in tRNA(Asp) + GDP-alpha-D-mannose = O-4''-alpha-D-mannosylqueuosine(34) in tRNA(Asp) + GDP + H(+). Glycosyltransferase that specifically catalyzes mannosylation of cytoplasmic tRNA(Asp) modified with queuosine at position 34 (queuosine(34)). Mannosylates the cyclopentene moiety of queuosine(34) in tRNA(Asp) to form mannosyl-queuosine(34). Mannosylation of queuosine(34) in tRNA(Asp) is required to slow-down elongation at cognate codons, GAC and GAU, thereby regulating protein translation. This chain is tRNA-queuosine alpha-mannosyltransferase (GTDC1), found in Bos taurus (Bovine).